The sequence spans 183 residues: ATP-dependent protease subunit HslV (183 aa).

The active site involves Thr-7. Positions 162, 165, and 168 each coordinate Na(+).

This sequence belongs to the peptidase T1B family. HslV subfamily. In terms of assembly, a double ring-shaped homohexamer of HslV is capped on each side by a ring-shaped HslU homohexamer. The assembly of the HslU/HslV complex is dependent on binding of ATP.

It is found in the cytoplasm. It carries out the reaction ATP-dependent cleavage of peptide bonds with broad specificity.. Its activity is regulated as follows. Allosterically activated by HslU binding. Functionally, protease subunit of a proteasome-like degradation complex believed to be a general protein degrading machinery. This chain is ATP-dependent protease subunit HslV, found in Chromobacterium violaceum (strain ATCC 12472 / DSM 30191 / JCM 1249 / CCUG 213 / NBRC 12614 / NCIMB 9131 / NCTC 9757 / MK).